Here is a 491-residue protein sequence, read N- to C-terminus: Trigger factor (491 aa).

In terms of domain architecture, PPIase FKBP-type spans glycine 169–isoleucine 254. The tract at residues lysine 434–glutamate 491 is disordered. Residues lysine 452–alanine 461 are compositionally biased toward basic residues.

This sequence belongs to the FKBP-type PPIase family. Tig subfamily.

It is found in the cytoplasm. The catalysed reaction is [protein]-peptidylproline (omega=180) = [protein]-peptidylproline (omega=0). Involved in protein export. Acts as a chaperone by maintaining the newly synthesized protein in an open conformation. Functions as a peptidyl-prolyl cis-trans isomerase. This is Trigger factor from Sinorhizobium medicae (strain WSM419) (Ensifer medicae).